The sequence spans 23 residues: Brevinin-1SE (23 aa).

C17 and C23 are joined by a disulfide.

Expressed by the skin glands.

The protein resides in the secreted. Mast cell degranulating peptide. Causes histamine release from rat peritoneal mast cells in vitro. Has antibacterial activity against the Gram-negative bacterium E.coli K12 and Gram-positive bacterium M.luteus NCT C2665. This chain is Brevinin-1SE, found in Lithobates sevosus (Dusky gopher frog).